The primary structure comprises 532 residues: NMDA receptor synaptonuclear signaling and neuronal migration factor (532 aa).

A lipid anchor (N-myristoyl glycine) is attached at glycine 2. Positions 2–235 are necessary and sufficient to elicit dendritic processes and synaptic contacts; sequence GAAASRRRAL…FSFQTATTTM (234 aa). 2 disordered regions span residues 34–67 and 127–174; these read SQSH…APHN and RRQR…GCAK. Over residues 38-48 the composition is skewed to basic and acidic residues; it reads PENRNGADHLL. Positions 127–139 are enriched in basic residues; that stretch reads RRQRERHPHHHSQ. The segment covering 155–164 has biased composition (polar residues); it reads PCQSWAGSRQ. Serine 206 bears the Phosphoserine mark. Residues 247–252 carry the Nuclear localization signal motif; that stretch reads RKRRKR. A disordered region spans residues 275 to 315; it reads RVKAQTFAERRERSFSRSWSDPTPMKADTSHDSRDSSDLQS. 2 positions are modified to phosphoserine: serine 292 and serine 294. Over residues 302–311 the composition is skewed to basic and acidic residues; it reads DTSHDSRDSS.

Belongs to the NSMF family. In terms of assembly, interacts with KPNA1; the interaction occurs in a calcium-independent manner after synaptic NMDA receptor stimulation and is required for nuclear import of NSMF but is competed by CABP1. Interacts (via the central NLS-containing motif region) with CABP1 (via EF-hands 1 and 2); the interaction occurs in a calcium-dependent manner after synaptic NMDA receptor stimulation and prevents the nuclear import of NSMF. Cannot be competed by calmodulin. In terms of processing, proteolytically processed after NMDA receptor activation. Cleaved in a calcium-dependent and calpain-sensitive manner. Calpain cleavage is essential for the translocation process from dendrites to the nucleus. Expressed in the radiatum and pyramidale strata of the hippocampus (at protein level). Strongly expressed in the brain. Expressed in the sensory and motor cortex, hippocampus, olfactory bulb, thalamus and amygdala. In the olfactory bulb expressed in the granular cell layer, mitral cell layer and the glomerular layer. In the hippocampus highly expressed in the regions associated with neuronal cell types as CA1, CA2, CA3 and granule cells of the dentate gyrus. All isoforms have been detected in the molecular layers of the hippocampus.

The protein localises to the nucleus. The protein resides in the nucleus envelope. It localises to the nucleus membrane. Its subcellular location is the nucleus matrix. It is found in the cytoplasm. The protein localises to the cell cortex. The protein resides in the cytoskeleton. It localises to the cell membrane. Its subcellular location is the cell projection. It is found in the dendrite. The protein localises to the synapse. The protein resides in the synaptosome. It localises to the postsynaptic density. Its subcellular location is the membrane. Couples NMDA-sensitive glutamate receptor signaling to the nucleus and triggers long-lasting changes in the cytoarchitecture of dendrites and spine synapse processes. Part of the cAMP response element-binding protein (CREB) shut-off signaling pathway. Stimulates outgrowth of olfactory axons and migration of gonadotropin-releasing hormone (GnRH) and luteinizing-hormone-releasing hormone (LHRH) neuronal cells. This chain is NMDA receptor synaptonuclear signaling and neuronal migration factor (Nsmf), found in Rattus norvegicus (Rat).